A 187-amino-acid chain; its full sequence is UPF0302 protein SERP1032 (187 aa).

It belongs to the UPF0302 family.

The sequence is that of UPF0302 protein SERP1032 from Staphylococcus epidermidis (strain ATCC 35984 / DSM 28319 / BCRC 17069 / CCUG 31568 / BM 3577 / RP62A).